A 386-amino-acid polypeptide reads, in one-letter code: MNLHEYQAKALLRAAGIKTPRGIIIKNSVEAKEAAQQLGGNRWVVKAQIHSGGRGKAGGIKTAQTLDEVHHISAAMLGSRLKTEQSSADGLPINEVLIEEECRAIATYYLALTLDRPRQQIVFIASMAGGTEIETVAETNPEAIIYAGVNPAIGFSPYLSARVGGALQLDKSYQLPLTKLMNRLYQLFIDNDLTLLELNPLIITEDHEFLPLDAKISIDDNALFRHQELVDLRDTTQEDHRETQAQELQLNYVPLDGTIGCIANGAGLAMATMDIIKLYGGEPANFLDVGGDATSERVKQAFKLILTSSRIKSILVNIFGGIVRCDLIADGIIQAAKEIDLKIPVIVRLQGNNVDLGRKMLDECPLNLQAADDLIDAAQKAIAAAQ.

One can recognise an ATP-grasp domain in the interval 9-244 (KALLRAAGIK…TTQEDHRETQ (236 aa)). ATP is bound by residues Lys46, 53–55 (GRG), Glu100, and Arg103. 2 residues coordinate Mg(2+): Asn199 and Asp213. Substrate contacts are provided by residues Asn264 and 321–323 (GIV).

This sequence belongs to the succinate/malate CoA ligase beta subunit family. In terms of assembly, heterotetramer of two alpha and two beta subunits. It depends on Mg(2+) as a cofactor.

It carries out the reaction succinate + ATP + CoA = succinyl-CoA + ADP + phosphate. The catalysed reaction is GTP + succinate + CoA = succinyl-CoA + GDP + phosphate. It participates in carbohydrate metabolism; tricarboxylic acid cycle; succinate from succinyl-CoA (ligase route): step 1/1. Functionally, succinyl-CoA synthetase functions in the citric acid cycle (TCA), coupling the hydrolysis of succinyl-CoA to the synthesis of either ATP or GTP and thus represents the only step of substrate-level phosphorylation in the TCA. The beta subunit provides nucleotide specificity of the enzyme and binds the substrate succinate, while the binding sites for coenzyme A and phosphate are found in the alpha subunit. This chain is Succinate--CoA ligase [ADP-forming] subunit beta, found in Dichelobacter nodosus (strain VCS1703A).